The sequence spans 397 residues: Acetate kinase (397 aa).

Asn7 is a binding site for Mg(2+). Lys14 contributes to the ATP binding site. Substrate is bound at residue Arg90. Asp147 (proton donor/acceptor) is an active-site residue. ATP contacts are provided by residues 207–211, 282–284, and 330–334; these read HLGNG, DFR, and GLGEN. Residue Glu383 participates in Mg(2+) binding.

Belongs to the acetokinase family. As to quaternary structure, homodimer. Requires Mg(2+) as cofactor. Mn(2+) is required as a cofactor.

The protein resides in the cytoplasm. The catalysed reaction is acetate + ATP = acetyl phosphate + ADP. Its pathway is metabolic intermediate biosynthesis; acetyl-CoA biosynthesis; acetyl-CoA from acetate: step 1/2. Catalyzes the formation of acetyl phosphate from acetate and ATP. Can also catalyze the reverse reaction. This Clostridium botulinum (strain 657 / Type Ba4) protein is Acetate kinase.